The chain runs to 390 residues: Dual-specificity RNA methyltransferase RlmN (390 aa).

Glu-110 (proton acceptor) is an active-site residue. A Radical SAM core domain is found at 116-355 (EADRATLCVS…VIIRKTRGDD (240 aa)). Residues Cys-123 and Cys-360 are joined by a disulfide bond. [4Fe-4S] cluster-binding residues include Cys-130, Cys-134, and Cys-137. S-adenosyl-L-methionine-binding positions include 184-185 (GE), Ser-216, 238-240 (SLH), and Asn-317. Catalysis depends on Cys-360, which acts as the S-methylcysteine intermediate.

This sequence belongs to the radical SAM superfamily. RlmN family. [4Fe-4S] cluster serves as cofactor.

It is found in the cytoplasm. The catalysed reaction is adenosine(2503) in 23S rRNA + 2 reduced [2Fe-2S]-[ferredoxin] + 2 S-adenosyl-L-methionine = 2-methyladenosine(2503) in 23S rRNA + 5'-deoxyadenosine + L-methionine + 2 oxidized [2Fe-2S]-[ferredoxin] + S-adenosyl-L-homocysteine. It catalyses the reaction adenosine(37) in tRNA + 2 reduced [2Fe-2S]-[ferredoxin] + 2 S-adenosyl-L-methionine = 2-methyladenosine(37) in tRNA + 5'-deoxyadenosine + L-methionine + 2 oxidized [2Fe-2S]-[ferredoxin] + S-adenosyl-L-homocysteine. Functionally, specifically methylates position 2 of adenine 2503 in 23S rRNA and position 2 of adenine 37 in tRNAs. m2A2503 modification seems to play a crucial role in the proofreading step occurring at the peptidyl transferase center and thus would serve to optimize ribosomal fidelity. The protein is Dual-specificity RNA methyltransferase RlmN of Haemophilus influenzae (strain ATCC 51907 / DSM 11121 / KW20 / Rd).